A 231-amino-acid polypeptide reads, in one-letter code: Septum site-determining protein MinC (231 aa).

Belongs to the MinC family. In terms of assembly, interacts with MinD and FtsZ.

Cell division inhibitor that blocks the formation of polar Z ring septums. Rapidly oscillates between the poles of the cell to destabilize FtsZ filaments that have formed before they mature into polar Z rings. Prevents FtsZ polymerization. The chain is Septum site-determining protein MinC from Shigella flexneri.